The following is a 233-amino-acid chain: Gamma-interferon-responsive lysosomal thiol protein (233 aa).

The first 26 residues, 1 to 26 (MVSSSLTKLVFFGCLLLLTFTDNLVA), serve as a signal peptide directing secretion. C42 and C45 form a disulfide bridge. N-linked (GlcNAc...) asparagine glycosylation is found at N80 and N207. A propeptide spans 200–233 (TTLPKVCNSSASMSKSPERKWKLQVSYANKATNY) (removed in mature form).

Belongs to the GILT family. As to quaternary structure, dimer; disulfide-linked. In terms of tissue distribution, expressed in the outer integument of seed coat.

Its subcellular location is the secreted. It is found in the lysosome. Lysosomal thiol reductase that can reduce protein disulfide bonds. May facilitate the complete unfolding of proteins destined for lysosomal degradation. The sequence is that of Gamma-interferon-responsive lysosomal thiol protein from Arabidopsis thaliana (Mouse-ear cress).